The chain runs to 330 residues: ADP-L-glycero-D-manno-heptose-6-epimerase (330 aa).

Residues 11 to 12 (FI), 32 to 33 (DN), Lys39, Lys54, 75 to 79 (EGACS), and Asn92 each bind NADP(+). Tyr139 (proton acceptor) is an active-site residue. Lys143 contributes to the NADP(+) binding site. Residue Asn168 coordinates substrate. NADP(+)-binding residues include Val169 and Lys177. Lys177 acts as the Proton acceptor in catalysis. Residues Arg179, His186, 200–203 (FGEY), Arg213, and Tyr292 each bind substrate.

It belongs to the NAD(P)-dependent epimerase/dehydratase family. HldD subfamily. Homopentamer. NADP(+) serves as cofactor.

The enzyme catalyses ADP-D-glycero-beta-D-manno-heptose = ADP-L-glycero-beta-D-manno-heptose. The protein operates within nucleotide-sugar biosynthesis; ADP-L-glycero-beta-D-manno-heptose biosynthesis; ADP-L-glycero-beta-D-manno-heptose from D-glycero-beta-D-manno-heptose 7-phosphate: step 4/4. In terms of biological role, catalyzes the interconversion between ADP-D-glycero-beta-D-manno-heptose and ADP-L-glycero-beta-D-manno-heptose via an epimerization at carbon 6 of the heptose. This chain is ADP-L-glycero-D-manno-heptose-6-epimerase, found in Burkholderia cenocepacia (strain ATCC BAA-245 / DSM 16553 / LMG 16656 / NCTC 13227 / J2315 / CF5610) (Burkholderia cepacia (strain J2315)).